The following is a 198-amino-acid chain: Imidazoleglycerol-phosphate dehydratase (198 aa).

This sequence belongs to the imidazoleglycerol-phosphate dehydratase family.

Its subcellular location is the cytoplasm. The catalysed reaction is D-erythro-1-(imidazol-4-yl)glycerol 3-phosphate = 3-(imidazol-4-yl)-2-oxopropyl phosphate + H2O. Its pathway is amino-acid biosynthesis; L-histidine biosynthesis; L-histidine from 5-phospho-alpha-D-ribose 1-diphosphate: step 6/9. The protein is Imidazoleglycerol-phosphate dehydratase of Streptomyces griseus subsp. griseus (strain JCM 4626 / CBS 651.72 / NBRC 13350 / KCC S-0626 / ISP 5235).